Here is a 381-residue protein sequence, read N- to C-terminus: Bifunctional polyhydroxybutyrate synthase / ABC transporter periplasmic binding protein (381 aa).

The first 22 residues, Met1–Ala22, serve as a signal peptide directing secretion.

The protein belongs to the bacterial solute-binding protein PotD/PotF family.

The protein localises to the periplasm. It carries out the reaction (3R)-3-hydroxybutanoyl-CoA + [(3R)-hydroxybutanoate](n) = [(3R)-hydroxybutanoate](n+1) + CoA. In terms of biological role, catalyzes the formation of short polymers of R-3-hydroxybutyrate (cPHB). Involved in natural transformation. Probably part of the ABC transporter complex YdcSTUV. During natural transformation, may bind dsDNA and convey it to the inner membrane channel formed by YdcV. This is Bifunctional polyhydroxybutyrate synthase / ABC transporter periplasmic binding protein (ydcS) from Escherichia coli (strain K12).